Here is a 227-residue protein sequence, read N- to C-terminus: Acyl-protein thioesterase 1 (227 aa).

Active-site charge relay system residues include serine 119, aspartate 173, and histidine 207.

This sequence belongs to the AB hydrolase superfamily. AB hydrolase 2 family.

It localises to the cytoplasm. Its subcellular location is the nucleus. The enzyme catalyses S-hexadecanoyl-L-cysteinyl-[protein] + H2O = L-cysteinyl-[protein] + hexadecanoate + H(+). In terms of biological role, hydrolyzes fatty acids from S-acylated cysteine residues in proteins with a strong preference for palmitoylated G-alpha proteins over other acyl substrates. Mediates the deacylation of G-alpha proteins such as GPA1 in vivo, but has weak or no activity toward palmitoylated Ras proteins. Has weak lysophospholipase activity in vitro; however such activity may not exist in vivo. The sequence is that of Acyl-protein thioesterase 1 from Saccharomyces cerevisiae (strain ATCC 204508 / S288c) (Baker's yeast).